Reading from the N-terminus, the 151-residue chain is Transcriptional regulator MraZ (151 aa).

SpoVT-AbrB domains are found at residues 5–52 (ANAI…PLDE) and 81–124 (AVDL…DEDA).

The protein belongs to the MraZ family. In terms of assembly, forms oligomers.

It localises to the cytoplasm. The protein localises to the nucleoid. This chain is Transcriptional regulator MraZ, found in Pseudomonas fluorescens (strain Pf0-1).